The sequence spans 97 residues: DNA-directed RNA polymerase subunit omega (97 aa).

Positions 1 to 16 (MSTPNALAAFNSSPSL) are enriched in polar residues. The tract at residues 1–21 (MSTPNALAAFNSSPSLNAPEG) is disordered.

This sequence belongs to the RNA polymerase subunit omega family. The RNAP catalytic core consists of 2 alpha, 1 beta, 1 beta' and 1 omega subunit. When a sigma factor is associated with the core the holoenzyme is formed, which can initiate transcription.

The catalysed reaction is RNA(n) + a ribonucleoside 5'-triphosphate = RNA(n+1) + diphosphate. Its function is as follows. Promotes RNA polymerase assembly. Latches the N- and C-terminal regions of the beta' subunit thereby facilitating its interaction with the beta and alpha subunits. This chain is DNA-directed RNA polymerase subunit omega, found in Saccharopolyspora erythraea (strain ATCC 11635 / DSM 40517 / JCM 4748 / NBRC 13426 / NCIMB 8594 / NRRL 2338).